We begin with the raw amino-acid sequence, 308 residues long: tRNA dimethylallyltransferase (308 aa).

10 to 17 (GPTASGKT) serves as a coordination point for ATP. 12-17 (TASGKT) serves as a coordination point for substrate. Interaction with substrate tRNA stretches follow at residues 35–38 (DSSL) and 159–163 (QRIFR).

Belongs to the IPP transferase family. In terms of assembly, monomer. Requires Mg(2+) as cofactor.

The enzyme catalyses adenosine(37) in tRNA + dimethylallyl diphosphate = N(6)-dimethylallyladenosine(37) in tRNA + diphosphate. Functionally, catalyzes the transfer of a dimethylallyl group onto the adenine at position 37 in tRNAs that read codons beginning with uridine, leading to the formation of N6-(dimethylallyl)adenosine (i(6)A). This Francisella tularensis subsp. novicida (strain U112) protein is tRNA dimethylallyltransferase.